Reading from the N-terminus, the 341-residue chain is tRNA N6-adenosine threonylcarbamoyltransferase (341 aa).

2 residues coordinate Fe cation: His111 and His115. Residues 134 to 138 (LVSGG), Asp167, Gly180, and Asn276 each bind substrate. Asp304 contacts Fe cation.

The protein belongs to the KAE1 / TsaD family. Fe(2+) is required as a cofactor.

The protein localises to the cytoplasm. It catalyses the reaction L-threonylcarbamoyladenylate + adenosine(37) in tRNA = N(6)-L-threonylcarbamoyladenosine(37) in tRNA + AMP + H(+). In terms of biological role, required for the formation of a threonylcarbamoyl group on adenosine at position 37 (t(6)A37) in tRNAs that read codons beginning with adenine. Is involved in the transfer of the threonylcarbamoyl moiety of threonylcarbamoyl-AMP (TC-AMP) to the N6 group of A37, together with TsaE and TsaB. TsaD likely plays a direct catalytic role in this reaction. This chain is tRNA N6-adenosine threonylcarbamoyltransferase, found in Stutzerimonas stutzeri (strain A1501) (Pseudomonas stutzeri).